The primary structure comprises 204 residues: Ribonuclease HII (204 aa).

The region spanning 17–204 (TLIAGVDEVG…KPVKKVLGLL (188 aa)) is the RNase H type-2 domain. Aspartate 23, glutamate 24, and aspartate 115 together coordinate a divalent metal cation.

Belongs to the RNase HII family. Mn(2+) serves as cofactor. The cofactor is Mg(2+).

The protein localises to the cytoplasm. The catalysed reaction is Endonucleolytic cleavage to 5'-phosphomonoester.. Its function is as follows. Endonuclease that specifically degrades the RNA of RNA-DNA hybrids. The protein is Ribonuclease HII of Psychromonas ingrahamii (strain DSM 17664 / CCUG 51855 / 37).